Reading from the N-terminus, the 438-residue chain is Battenin (438 aa).

The segment at 1–27 (MGSSAGSWRRLEDSEREETDSEPQAPR) is disordered. Residues 1 to 37 (MGSSAGSWRRLEDSEREETDSEPQAPRLDSRSVLWKN) lie on the Cytoplasmic side of the membrane. Ser-14 carries the phosphoserine modification. A helical transmembrane segment spans residues 38–58 (AVGFWILGLCNNFSYVVMLSA). Residues 59–127 (AHDILKQEQA…GLHLLPYSPR (69 aa)) lie on the Lumenal side of the membrane. The disordered stretch occupies residues 67–87 (QASGNQSHVEPGPTPTPHNSS). N-linked (GlcNAc...) asparagine glycosylation is found at Asn-71 and Asn-85. The chain crosses the membrane as a helical span at residues 128–148 (VLVSGVCSAGSFVLVAFSQSV). Residues 149–151 (GLS) are Cytoplasmic-facing. The helical transmembrane segment at 152–172 (LCGVVLASISSGLGEVTFLSL) threads the bilayer. Residues 173 to 182 (TAFYPSAVIS) lie on the Lumenal side of the membrane. The chain crosses the membrane as a helical span at residues 183 to 203 (WWSSGTGGAGLLGSLSYLGLT). The Cytoplasmic segment spans residues 204–277 (QAGLSPQHTL…DLSLQERWTV (74 aa)). The interval 239 to 261 (PGGENEAETAARQPLIGTETPES) is disordered. A Lysosomal targeting motif motif is present at residues 242-244 (ENE). Positions 253–254 (LI) match the Lysosomal targeting motif. Required for AP1G1, AP2A2 and AP3D1 interaction motif. The helical transmembrane segment at 278 to 298 (FKGLLWYIIPLVLVYFAEYFI) threads the bilayer. At 299-346 (NQGLFELLFFRNTSLSHAQQYRWYQMLYQAGVFASRSSLQCCRIRFTW) the chain is on the lumenal side. Residue Asn-310 is glycosylated (N-linked (GlcNAc...) asparagine). A helical membrane pass occupies residues 347 to 367 (VLALLQCLNLALLLADVCLNF). The Cytoplasmic portion of the chain corresponds to 368-438 (LPSIYLIFII…PLHDFLCHLP (71 aa)). A Lysosomal targeting motif motif is present at residues 409 to 419 (MEAACISDTLG). Cys-435 is subject to Cysteine methyl ester. The S-farnesyl cysteine moiety is linked to residue Cys-435. A propeptide spans 436-438 (HLP) (removed in mature form).

Belongs to the battenin family. In terms of assembly, homooligomer. Interacts with DCTN1, KIF3A, RAB7A and RILP. Interacts with CLN5. Interacts with KCNIP3. Highly glycosylated. In terms of processing, farnesylation is important for trafficking to lysosomes. Expressed throughout the brain, such as, in the cerebral cortex, hippocampus, cerebellum and several different cerebral nuclei (at protein level). In the cerebral cortex, expressed in all cortical layers. In the hippocampus, expressed in the granule cells in the dentate gyrus and the pyramidal cells of the hippocampus proper. In the cerebellum expressed in the granular and molecular layers, and in the Purkinje cell layer.

The protein localises to the lysosome membrane. The protein resides in the late endosome. Its subcellular location is the lysosome. It localises to the membrane raft. It is found in the golgi apparatus. The protein localises to the trans-Golgi network. The protein resides in the synapse. Its subcellular location is the synaptosome. It localises to the early endosome membrane. It is found in the late endosome membrane. The protein localises to the cytoplasmic vesicle. The protein resides in the autophagosome. In terms of biological role, mediates microtubule-dependent, anterograde transport connecting the Golgi network, endosomes, autophagosomes, lysosomes and plasma membrane, and participates in several cellular processes such as regulation of lysosomal pH, lysosome protein degradation, receptor-mediated endocytosis, autophagy, transport of proteins and lipids from the TGN, apoptosis and synaptic transmission. Facilitates the proteins transport from trans-Golgi network (TGN)-to other membrane compartments such as transport of microdomain-associated proteins to the plasma membrane, IGF2R transport to the lysosome where it regulates the CTSD release leading to regulation of CTSD maturation and thereby APP intracellular processing. Moreover regulates CTSD activity in response to osmotic stress. Also binds galactosylceramide and transports it from the trans Golgi to the rafts, which may have immediate and downstream effects on cell survival by modulating ceramide synthesis. At the plasma membrane, regulates actin-dependent events including filopodia formation, cell migration, and pinocytosis through ARF1-CDC42 pathway and also the cytoskeleton organization through interaction with MYH10 and fodrin leading to the regulation of the plasma membrane association of Na+, K+ ATPase complex. Regulates synaptic transmission in the amygdala, hippocampus, and cerebellum through regulation of synaptic vesicles density and their proximity to active zones leading to modulation of short-term plasticity and age-dependent anxious behavior, learning and memory. Regulates autophagic vacuoles (AVs) maturation by modulating the trafficking between endocytic and autophagolysosomal/lysosomal compartments, which involves vesicle fusion leading to regulation of degradation process. Also participates in cellular homeostasis of compounds such as, water, ions, amino acids, proteins and lipids in several tissue namely in brain and kidney through regulation of their transport and synthesis. The protein is Battenin of Mus musculus (Mouse).